The primary structure comprises 120 residues: UPF0102 protein CBU_1742 (120 aa).

The protein belongs to the UPF0102 family.

This Coxiella burnetii (strain RSA 493 / Nine Mile phase I) protein is UPF0102 protein CBU_1742.